A 737-amino-acid polypeptide reads, in one-letter code: Prospero homeobox protein 1 (737 aa).

An interaction with RORG region spans residues 1–28 (MPDHDSTALLSRQTKRRRVDIGVKRTVG). A compositionally biased stretch (polar residues) spans 103–135 (KNGGTEPSFQASGLSSTGSEVHQEDICSNSSRD). The segment at 103 to 147 (KNGGTEPSFQASGLSSTGSEVHQEDICSNSSRDSPPECLSPFGRP) is disordered. Phosphoserine is present on residues Ser177, Ser179, Ser199, Ser291, and Ser295. Positions 178–221 (HSPSVALRGNENEREMAPQSVSPRESYRENKRKQKLPQQQQQSF) are disordered. Over residues 320 to 337 (MAENKPKREGSNKERDHG) the composition is skewed to basic and acidic residues. Disordered stretches follow at residues 320–344 (MAEN…LQPE) and 444–476 (RKNS…AGFT). Lys324 participates in a covalent cross-link: Glycyl lysine isopeptide (Lys-Gly) (interchain with G-Cter in SUMO2). Residues 464 to 476 (LHQSPLSATAGFT) show a composition bias toward polar residues. 2 positions are modified to phosphoserine: Ser511 and Ser514. The disordered stretch occupies residues 525-547 (RTKMSSHHLSHHPCSPAHPPSTA). Ser557 carries the phosphoserine modification. Residues 577-635 (QEGLSPNHLKKAKLMFFYTRYPSSNMLKTYFSDVKFNRCITSQLIKWFSNFREFYYIQM) enclose the Prospero-type homeo domain. The tract at residues 577 to 735 (QEGLSPNHLK…KSPNCLQELL (159 aa)) is homeo-Prospero. Residues 636–735 (EKYARQAIND…KSPNCLQELL (100 aa)) form the Prospero domain. Residues 723–729 (EIFKSPN) form an essential for nuclear localization, interaction with RORG, repression of RORG transcriptional activator activity region.

It belongs to the Prospero homeodomain family. As to quaternary structure, interacts with RORA and RORG (via AF-2 motif). Expressed in the young neurons of the subventricular region of the CNS, developing eye lens and pancreas. It is also found in the developing liver, heart and skeletal muscle. In the eye, expressed in the lens and retina at postnatal day 10. In the retina, localized to the inner nuclear layer. In the lens, localized to epithelial and fiber cells.

The protein resides in the nucleus. In terms of biological role, transcription factor involved in developmental processes such as cell fate determination, gene transcriptional regulation and progenitor cell regulation in a number of organs. Plays a critical role in embryonic development and functions as a key regulatory protein in neurogenesis and the development of the heart, eye lens, liver, pancreas and the lymphatic system. Involved in the regulation of the circadian rhythm. Represses: transcription of the retinoid-related orphan receptor RORG, transcriptional activator activity of RORA and RORG and the expression of RORA/G-target genes including core clock components: BMAL1, NPAS2 and CRY1 and metabolic genes: AVPR1A and ELOVL3. This Mus musculus (Mouse) protein is Prospero homeobox protein 1 (Prox1).